A 666-amino-acid polypeptide reads, in one-letter code: ATP synthase subunit alpha 2 (666 aa).

Gly182–Thr189 serves as a coordination point for ATP. The segment at Met527 to Arg666 is disordered. Residues Ala545–Ala590 show a composition bias toward basic and acidic residues. The segment covering Ala591–Pro601 has biased composition (low complexity). Residues Ala623–Ala641 are compositionally biased toward basic and acidic residues.

It belongs to the ATPase alpha/beta chains family. F-type ATPases have 2 components, CF(1) - the catalytic core - and CF(0) - the membrane proton channel. CF(1) has five subunits: alpha(3), beta(3), gamma(1), delta(1), epsilon(1). CF(0) has three main subunits: a(1), b(2) and c(9-12). The alpha and beta chains form an alternating ring which encloses part of the gamma chain. CF(1) is attached to CF(0) by a central stalk formed by the gamma and epsilon chains, while a peripheral stalk is formed by the delta and b chains.

It is found in the cell inner membrane. It catalyses the reaction ATP + H2O + 4 H(+)(in) = ADP + phosphate + 5 H(+)(out). Produces ATP from ADP in the presence of a proton gradient across the membrane. The alpha chain is a regulatory subunit. This is ATP synthase subunit alpha 2 from Burkholderia pseudomallei (strain K96243).